We begin with the raw amino-acid sequence, 430 residues long: KIN17-like protein (430 aa).

Residues 28–50 (CQMCQKQCRDENGFKCHCMSESH) form a C2H2-type zinc finger. A winged helix-turn-helix (wHTH) region spans residues 51 to 160 (QRQMQVFGQA…KARLKRKRIK (110 aa)). Residues 147–183 (EQAVKARLKRKRIKSDLAEDERQERMIARQIERAQQS) are a coiled coil. The Nuclear localization signal (NLS) signature appears at 155–158 (KRKR). Disordered stretches follow at residues 179-230 (RAQQ…ANKA) and 261-284 (EEED…GKDA). Residues 191–224 (LGDDASPDGSEGESGSEDEYSDSENDHEGQEEDA) show a composition bias toward acidic residues. A compositionally biased stretch (basic and acidic residues) spans 261–278 (EEEDEVSARDKEKEELAK). Residues 283-312 (DAINAAEARRSALDELMKEEEKAKERSNRK) are a coiled coil. The C-terminal subdomain A stretch occupies residues 319 to 370 (GIVVKVMSKSLAEKGYCKQKGVVKRVIDKYVGEIEMLESKHVLRVDQDELET). The interval 376–427 (GGLVRIVNGAYRGSNARLLSVDTERFCAKVQVEKGLYDGKVLKAIEYEDICK) is C-terminal subdomain B.

The protein belongs to the KIN17 family.

It localises to the nucleus. This is KIN17-like protein from Oryza sativa subsp. japonica (Rice).